Consider the following 556-residue polypeptide: 2-succinyl-5-enolpyruvyl-6-hydroxy-3-cyclohexene-1-carboxylate synthase (556 aa).

The protein belongs to the TPP enzyme family. MenD subfamily. As to quaternary structure, homodimer. Mg(2+) serves as cofactor. The cofactor is Mn(2+). Requires thiamine diphosphate as cofactor.

It catalyses the reaction isochorismate + 2-oxoglutarate + H(+) = 5-enolpyruvoyl-6-hydroxy-2-succinyl-cyclohex-3-ene-1-carboxylate + CO2. It functions in the pathway quinol/quinone metabolism; 1,4-dihydroxy-2-naphthoate biosynthesis; 1,4-dihydroxy-2-naphthoate from chorismate: step 2/7. Its pathway is quinol/quinone metabolism; menaquinone biosynthesis. Functionally, catalyzes the thiamine diphosphate-dependent decarboxylation of 2-oxoglutarate and the subsequent addition of the resulting succinic semialdehyde-thiamine pyrophosphate anion to isochorismate to yield 2-succinyl-5-enolpyruvyl-6-hydroxy-3-cyclohexene-1-carboxylate (SEPHCHC). The sequence is that of 2-succinyl-5-enolpyruvyl-6-hydroxy-3-cyclohexene-1-carboxylate synthase from Staphylococcus epidermidis (strain ATCC 12228 / FDA PCI 1200).